Consider the following 92-residue polypeptide: Small ribosomal subunit protein uS19c (92 aa).

Belongs to the universal ribosomal protein uS19 family.

The protein resides in the plastid. The protein localises to the chloroplast. Its function is as follows. Protein S19 forms a complex with S13 that binds strongly to the 16S ribosomal RNA. The chain is Small ribosomal subunit protein uS19c (rps19) from Trieres chinensis (Marine centric diatom).